A 166-amino-acid chain; its full sequence is Cyclic pyranopterin monophosphate synthase (166 aa).

Residues 83-85 and 121-122 each bind substrate; these read LCH and ME. Asp136 is an active-site residue.

This sequence belongs to the MoaC family. As to quaternary structure, homohexamer; trimer of dimers.

The catalysed reaction is (8S)-3',8-cyclo-7,8-dihydroguanosine 5'-triphosphate = cyclic pyranopterin phosphate + diphosphate. It participates in cofactor biosynthesis; molybdopterin biosynthesis. Functionally, catalyzes the conversion of (8S)-3',8-cyclo-7,8-dihydroguanosine 5'-triphosphate to cyclic pyranopterin monophosphate (cPMP). The chain is Cyclic pyranopterin monophosphate synthase from Trichodesmium erythraeum (strain IMS101).